Reading from the N-terminus, the 278-residue chain is Potassium/proton antiporter CemA (278 aa).

Helical transmembrane passes span isoleucine 61–glycine 81, alanine 155–threonine 175, isoleucine 203–isoleucine 223, and phenylalanine 238–isoleucine 258.

It belongs to the CemA family.

Its subcellular location is the plastid. The protein localises to the chloroplast inner membrane. The enzyme catalyses K(+)(in) + H(+)(out) = K(+)(out) + H(+)(in). In terms of biological role, contributes to K(+)/H(+) antiport activity by supporting proton efflux to control proton extrusion and homeostasis in chloroplasts in a light-dependent manner to modulate photosynthesis. Prevents excessive induction of non-photochemical quenching (NPQ) under continuous-light conditions. Indirectly promotes efficient inorganic carbon uptake into chloroplasts. The polypeptide is Potassium/proton antiporter CemA (Pyropia yezoensis (Susabi-nori)).